A 157-amino-acid polypeptide reads, in one-letter code: MTQDTKTDFQKPSDNDLRERLTPIQYQVTQHEGTERAFTGEYWDHDEDGIYVDVVSGEPLFSSLDKYDAGCGWPSFTQPIPDVALTENTDYKIGYARTEVRSASADSHLGHVFPDGPRDRGGLRYCINSAALRFVPLSELDAQGYGQYRALFEGRQG.

One can recognise a MsrB domain in the interval 14–137; that stretch reads DNDLRERLTP…NSAALRFVPL (124 aa). The Nucleophile role is filled by Cys-126.

The protein belongs to the MsrB Met sulfoxide reductase family.

It carries out the reaction L-methionyl-[protein] + [thioredoxin]-disulfide + H2O = L-methionyl-(R)-S-oxide-[protein] + [thioredoxin]-dithiol. The protein is Peptide methionine sulfoxide reductase MsrB of Deinococcus radiodurans (strain ATCC 13939 / DSM 20539 / JCM 16871 / CCUG 27074 / LMG 4051 / NBRC 15346 / NCIMB 9279 / VKM B-1422 / R1).